Here is a 118-residue protein sequence, read N- to C-terminus: Holo-[acyl-carrier-protein] synthase (118 aa).

2 residues coordinate Mg(2+): Asp9 and Glu52.

The protein belongs to the P-Pant transferase superfamily. AcpS family. Mg(2+) serves as cofactor.

The protein resides in the cytoplasm. It catalyses the reaction apo-[ACP] + CoA = holo-[ACP] + adenosine 3',5'-bisphosphate + H(+). Functionally, transfers the 4'-phosphopantetheine moiety from coenzyme A to a Ser of acyl-carrier-protein. The chain is Holo-[acyl-carrier-protein] synthase from Frankia casuarinae (strain DSM 45818 / CECT 9043 / HFP020203 / CcI3).